Consider the following 126-residue polypeptide: Small ribosomal subunit protein uS12 (126 aa).

Positions 1-28 are disordered; sequence MPTINQLVRKGRRKVRTKSKSPALDGNP. Positions 9–19 are enriched in basic residues; it reads RKGRRKVRTKS. Asp89 bears the 3-methylthioaspartic acid mark. The interval 106–126 is disordered; it reads GVEKRRRSRSKYGVKRPKAAK. The span at 109–126 shows a compositional bias: basic residues; sequence KRRRSRSKYGVKRPKAAK.

Belongs to the universal ribosomal protein uS12 family. In terms of assembly, part of the 30S ribosomal subunit. Contacts proteins S8 and S17. May interact with IF1 in the 30S initiation complex.

With S4 and S5 plays an important role in translational accuracy. Its function is as follows. Interacts with and stabilizes bases of the 16S rRNA that are involved in tRNA selection in the A site and with the mRNA backbone. Located at the interface of the 30S and 50S subunits, it traverses the body of the 30S subunit contacting proteins on the other side and probably holding the rRNA structure together. The combined cluster of proteins S8, S12 and S17 appears to hold together the shoulder and platform of the 30S subunit. The sequence is that of Small ribosomal subunit protein uS12 from Opitutus terrae (strain DSM 11246 / JCM 15787 / PB90-1).